We begin with the raw amino-acid sequence, 221 residues long: Transcription factor MYB1 (221 aa).

HTH myb-type domains are found at residues 1–57 and 58–112; these read MESV…LNYL and RPNI…QKKL. 2 consecutive DNA-binding regions (H-T-H motif) follow at residues 33–57 and 85–108; these read WHQV…LNYL and WSLI…NTHL. A disordered region spans residues 126–154; it reads KTIVPKGTEAQPRAHPKSPPRPSPPSNNE.

Expressed in stems and leaves. Expressed at low levels in ovaries.

The protein resides in the nucleus. Transcription activator involved in the regulation of anthocyanin biosynthesis in red-fleshed kiwifruit varieties. Activates the transcription of genes involved in anthocyanin biosynthesis, such as dihydroflavonol reductase (DFR), anthocyanidin synthase (ANS) and UDP flavonoid glycosyltransferase (UFGT). The protein is Transcription factor MYB1 of Actinidia chinensis var. chinensis (Chinese soft-hair kiwi).